Here is a 498-residue protein sequence, read N- to C-terminus: MRTNPTTSSPVVPTLEEKNLGRIAQIIGPVLDVVFPPGKMPNIYNALVVKGRDTVGQQINVTCEVQQLLGNNRVRAVAMSATDGLMRGMEVIDTGAPLSVPVGGATLGRIFNVLGEPVDNLGPVDTRTTSPIHRSAPAFIQLDTKLSIFETGIKVVDLLAPYRRGGKIGLFGGAGVGKTVLIMELINNIAKAHGGVSVFGGVGERTREGNDLYMEMKESGVINEKNIAESKVALVYGQMNEPPGARMRVGLTALTMAEYFRDVNEQDVLLFIDNIFRFVQAGSEVSALLGRMPSAVGYQPTLSTEMGSLQERITSTKEGSITSIQAVYVPADDLTDPAPATTFAHLDATTVLSRVLAAKGIYPAVDPLDSTSTMLQPRIVGEEHYETAQRVKQTSQRYKELQDIIAILGLDELSEEDRLTVARARKIERFLSQPFFVAEVFTGSPGKYVGLAETIRGFQLILSGELDGLPEQAFYLVGNIDEATAKAMNLEVESKLKK.

172 to 179 (GGAGVGKT) contacts ATP.

It belongs to the ATPase alpha/beta chains family. As to quaternary structure, F-type ATPases have 2 components, CF(1) - the catalytic core - and CF(0) - the membrane proton channel. CF(1) has five subunits: alpha(3), beta(3), gamma(1), delta(1), epsilon(1). CF(0) has four main subunits: a(1), b(1), b'(1) and c(9-12).

Its subcellular location is the plastid. The protein localises to the chloroplast thylakoid membrane. The enzyme catalyses ATP + H2O + 4 H(+)(in) = ADP + phosphate + 5 H(+)(out). In terms of biological role, produces ATP from ADP in the presence of a proton gradient across the membrane. The catalytic sites are hosted primarily by the beta subunits. This chain is ATP synthase subunit beta, chloroplastic, found in Elaeis oleifera (American oil palm).